The sequence spans 89 residues: Small ribosomal subunit protein uS15 (89 aa).

The protein belongs to the universal ribosomal protein uS15 family. As to quaternary structure, part of the 30S ribosomal subunit. Forms a bridge to the 50S subunit in the 70S ribosome, contacting the 23S rRNA.

Functionally, one of the primary rRNA binding proteins, it binds directly to 16S rRNA where it helps nucleate assembly of the platform of the 30S subunit by binding and bridging several RNA helices of the 16S rRNA. In terms of biological role, forms an intersubunit bridge (bridge B4) with the 23S rRNA of the 50S subunit in the ribosome. The sequence is that of Small ribosomal subunit protein uS15 from Anaeromyxobacter dehalogenans (strain 2CP-1 / ATCC BAA-258).